Here is a 303-residue protein sequence, read N- to C-terminus: Exosome complex component RRP4 homolog (303 aa).

Residues 175 to 213 (GILIKVPPHLIKKSKKHFHTLPYGMAVIIGCNGSVWVTP) enclose the KH domain.

This sequence belongs to the RRP4 family. As to quaternary structure, component of the RNA exosome complex. In terms of tissue distribution, ubiquitously expressed.

The protein resides in the nucleus. It localises to the nucleolus. Its subcellular location is the nucleoplasm. Functionally, non-catalytic component of the RNA exosome complex which has 3'-&gt;5' exoribonuclease activity and participates in a multitude of cellular RNA processing and degradation events. Involved in regulation of antisense ribosomal siRNA production. Involved in response to cold-warm shock. The protein is Exosome complex component RRP4 homolog of Caenorhabditis elegans.